The primary structure comprises 171 residues: Putative phosphoesterase BH1439 (171 aa).

Residue H34 is the Proton donor of the active site. 2 short sequence motifs (HXTX) span residues 34-37 (HVTL) and 115-118 (HLTI). Residue H115 is the Proton acceptor of the active site.

Belongs to the 2H phosphoesterase superfamily. YjcG family.

The protein is Putative phosphoesterase BH1439 of Halalkalibacterium halodurans (strain ATCC BAA-125 / DSM 18197 / FERM 7344 / JCM 9153 / C-125) (Bacillus halodurans).